Here is a 201-residue protein sequence, read N- to C-terminus: MSRYRGPRFKKIRRLGALPGLTSKRPRSGSDFKNQSRFGKKSQYRIRLEEKQKLRFHYGLTEQQLLRYVHIAGKAKGSTDQVLLQLLEMRLDNILFRLGMASTIPAARQLVNHRHILVNGRIVDIPSYRCKPRDIITSKDKQRSKVLIQNSIESSPHEELPKHLTIDSFQYKGLVNQIIDSKLIGLKINELLVVEYYSRQT.

One can recognise an S4 RNA-binding domain in the interval 89–150; it reads MRLDNILFRL…KQRSKVLIQN (62 aa).

This sequence belongs to the universal ribosomal protein uS4 family. In terms of assembly, part of the 30S ribosomal subunit. Contacts protein S5. The interaction surface between S4 and S5 is involved in control of translational fidelity.

The protein resides in the plastid. It localises to the chloroplast. Its function is as follows. One of the primary rRNA binding proteins, it binds directly to 16S rRNA where it nucleates assembly of the body of the 30S subunit. In terms of biological role, with S5 and S12 plays an important role in translational accuracy. The chain is Small ribosomal subunit protein uS4c (rps4) from Dioscorea elephantipes (Elephant's foot yam).